Consider the following 487-residue polypeptide: Acetyl-coenzyme A carboxylase carboxyl transferase subunit beta, chloroplastic (487 aa).

The disordered stretch occupies residues 180–201 (SRNSSENEGSSKRTRTKGSDLT). The CoA carboxyltransferase N-terminal domain occupies 218–487 (LWVQCENCYG…PLNQKSSKIK (270 aa)). Residues Cys-222, Cys-225, Cys-241, and Cys-244 each coordinate Zn(2+). A C4-type zinc finger spans residues 222–244 (CENCYGLNYKKFLKSKMNICEQC).

This sequence belongs to the AccD/PCCB family. Acetyl-CoA carboxylase is a heterohexamer composed of biotin carboxyl carrier protein, biotin carboxylase and 2 subunits each of ACCase subunit alpha and ACCase plastid-coded subunit beta (accD). It depends on Zn(2+) as a cofactor.

It is found in the plastid. The protein resides in the chloroplast stroma. It catalyses the reaction N(6)-carboxybiotinyl-L-lysyl-[protein] + acetyl-CoA = N(6)-biotinyl-L-lysyl-[protein] + malonyl-CoA. It participates in lipid metabolism; malonyl-CoA biosynthesis; malonyl-CoA from acetyl-CoA: step 1/1. Its function is as follows. Component of the acetyl coenzyme A carboxylase (ACC) complex. Biotin carboxylase (BC) catalyzes the carboxylation of biotin on its carrier protein (BCCP) and then the CO(2) group is transferred by the transcarboxylase to acetyl-CoA to form malonyl-CoA. In Atropa belladonna (Belladonna), this protein is Acetyl-coenzyme A carboxylase carboxyl transferase subunit beta, chloroplastic.